The following is a 44-amino-acid chain: Antibacterial protein 3 homolog (44 aa).

This sequence belongs to the staphylococcal hemolytic protein family.

The protein resides in the secreted. Has hemolytic activity and also inhibits the growth of gonococci. This chain is Antibacterial protein 3 homolog, found in Staphylococcus haemolyticus (strain JCSC1435).